The primary structure comprises 368 residues: Quinolinate synthase (368 aa).

Iminosuccinate contacts are provided by histidine 46 and serine 63. [4Fe-4S] cluster is bound at residue cysteine 110. Iminosuccinate contacts are provided by residues 141–143 (YVN) and serine 162. Cysteine 230 is a [4Fe-4S] cluster binding site. Residues 256–258 (HPE) and threonine 273 contribute to the iminosuccinate site. Residue cysteine 320 coordinates [4Fe-4S] cluster.

The protein belongs to the quinolinate synthase family. Type 3 subfamily. It depends on [4Fe-4S] cluster as a cofactor.

Its subcellular location is the cytoplasm. It carries out the reaction iminosuccinate + dihydroxyacetone phosphate = quinolinate + phosphate + 2 H2O + H(+). It participates in cofactor biosynthesis; NAD(+) biosynthesis; quinolinate from iminoaspartate: step 1/1. Functionally, catalyzes the condensation of iminoaspartate with dihydroxyacetone phosphate to form quinolinate. The chain is Quinolinate synthase from Bacillus cereus (strain ATCC 10987 / NRS 248).